We begin with the raw amino-acid sequence, 383 residues long: Protein COS7 (383 aa).

Topologically, residues 1-42 (MKENEVKDEKSVDVLSFKQLESQKIVLPQDLFRSSFTWFCYE) are cytoplasmic. The chain crosses the membrane as a helical span at residues 43–63 (IYKSLAFRIWMLLWLPLSVWW). The Extracellular segment spans residues 64-72 (KLSNNCIYP). A helical membrane pass occupies residues 73-93 (LIVSLLVLFLGPIFVLVICGL). Residues 94-232 (SRKRSLSKQL…RSKLTWFLKR (139 aa)) lie on the Cytoplasmic side of the membrane. The helical transmembrane segment at 233 to 253 (IFTIYSLPLWLAFLNCICVSQ) threads the bilayer. A topological domain (extracellular) is located at residue His-254. A helical membrane pass occupies residues 255–275 (FCLAFRILCPGLFFLMMVWLF). At 276–383 (QNMRTTALLV…SRNEESLMKK (108 aa)) the chain is on the cytoplasmic side.

Belongs to the DUP/COS family.

It is found in the membrane. This Saccharomyces cerevisiae (strain ATCC 204508 / S288c) (Baker's yeast) protein is Protein COS7 (COS7).